An 830-amino-acid polypeptide reads, in one-letter code: Frameshifted structural polyprotein (830 aa).

Positions 58-109 are disordered; sequence AIAPARPPKPKKKKTTKPKPKTQPKKINGKTQQQKKKDKQADKKKKKPGKRE. A compositionally biased stretch (basic residues) spans 65–107; it reads PKPKKKKTTKPKPKTQPKKINGKTQQQKKKDKQADKKKKKPGK. The tract at residues 94–106 is ribosome-binding; the sequence is KDKQADKKKKKPG. The cysteines at positions 119 and 134 are disulfide-linked. Positions 119 to 267 constitute a Peptidase S3 domain; sequence CIFEVKHEGK…RVTPEGSEEW (149 aa). Active-site charge relay system residues include His-145, Asp-167, and Ser-219. Residues Asn-280, Asn-327, Asn-533, and Asn-595 are each glycosylated (N-linked (GlcNAc...) asparagine; by host). A helical membrane pass occupies residues 702–722; it reads AVVGMSLLALISIFASCYMLV. S-palmitoyl cysteine; by host attachment occurs at residues Cys-718, Cys-728, Cys-748, and Cys-749. The tract at residues 728–748 is transient transmembrane before p62-6K protein processing; the sequence is CLTPYALTPGAAVPWTLGILC. Transmembrane regions (helical) follow at residues 771–791 and 793–813; these read ALFWLEFAAPVACILIITYCL and NVLCCCKSLSFLSATEPRGHR.

As to quaternary structure, homodimer. Homomultimer. Interacts with host karyopherin KPNA4; this interaction allows the nuclear import of the viral capsid protein. Precursor of protein E3/E2: The precursor of protein E3/E2 and E1 form a heterodimer shortly after synthesis. Interacts with host IRAK1; the interaction leads to inhibition of IRAK1-dependent signaling. Processing of the precursor of protein E3/E2 into E2 and E3 results in a heterodimer of the spike glycoproteins E2 and E1. Spike at virion surface are constituted of three E2-E1 heterodimers. Interacts with 6K protein. Interacts with host MXRA8; this interaction mediates virus entry. Specific enzymatic cleavages in vivo yield mature proteins. Capsid protein is auto-cleaved during polyprotein translation, unmasking a signal peptide at the N-terminus of the precursor of E3/E2. The remaining polyprotein is then targeted to the host endoplasmic reticulum, where host signal peptidase cleaves it into pE2 and TF. pE2 is further processed to mature E3 and E2 by host furin in trans-Golgi vesicle.

The protein localises to the virion. It is found in the host cytoplasm. It localises to the host cell membrane. The protein resides in the host nucleus. Its subcellular location is the virion membrane. The catalysed reaction is Autocatalytic release of the core protein from the N-terminus of the togavirus structural polyprotein by hydrolysis of a -Trp-|-Ser- bond.. Its function is as follows. Forms an icosahedral capsid with a T=4 symmetry composed of 240 copies of the capsid protein surrounded by a lipid membrane through which penetrate 80 spikes composed of trimers of E1-E2 heterodimers. The capsid protein binds to the viral RNA genome at a site adjacent to a ribosome binding site for viral genome translation following genome release. Possesses a protease activity that results in its autocatalytic cleavage from the nascent structural protein. Following its self-cleavage, the capsid protein transiently associates with ribosomes, and within several minutes the protein binds to viral RNA and rapidly assembles into icosahedric core particles. The resulting nucleocapsid eventually associates with the cytoplasmic domain of the spike glycoprotein E2 at the cell membrane, leading to budding and formation of mature virions. In case of infection, new virions attach to target cells and after clathrin-mediated endocytosis their membrane fuses with the host endosomal membrane. This leads to the release of the nucleocapsid into the cytoplasm, followed by an uncoating event necessary for the genomic RNA to become accessible. The uncoating might be triggered by the interaction of capsid proteins with ribosomes. Binding of ribosomes would release the genomic RNA since the same region is genomic RNA-binding and ribosome-binding. Specifically inhibits interleukin-1 receptor-associated kinase 1/IRAK1-dependent signaling during viral entry, representing a means by which the alphaviruses may evade innate immune detection and activation prior to viral gene expression. Provides the signal sequence for p62 (E3/E2) translocation to the host endoplasmic reticulum. Mediates pH protection of E1 during secretory pathway trans- port. Functionally, plays a role in viral attachment to target host cell, by binding to the cell receptor. Synthesized as a p62 precursor which is processed by furin at the cell membrane just before virion budding, giving rise to E2-E1 heterodimer. The p62-E1 heterodimer is stable, whereas E2-E1 is unstable and dissociate at low pH. p62 is processed at the last step, presumably to avoid E1 fusion activation before its final export to cell surface. E2 C-terminus contains a transitory transmembrane that would be disrupted by palmitoylation, resulting in reorientation of the C-terminal tail from lumenal to cytoplasmic side. This step is critical since E2 C-terminus is involved in budding by interacting with capsid proteins. This release of E2 C-terminus in cytoplasm occurs lately in protein export, and precludes premature assembly of particles at the endoplasmic reticulum membrane. In terms of biological role, virion component that may play a role during viral assembly. The chain is Frameshifted structural polyprotein from Aedes (Middle-African hedgehog).